The following is a 304-amino-acid chain: MAVTKELLQMDLYALLGIEEKAADKEVKKAYRQKALSCHPDKNPDNPRAAELFHQLSQALEVLTDAAARAAYDKVRKAKKQAAERTQKLDEKRKKVKLDLEARERQAQAQESEEEEESRSTRTLEQEIERLREEGSRQLEEQQRLIREQIRQERDQRLRGKAENTEGQGTPKLKLKWKCKKEDESKGGYSKDVLLRLLQKYGEVLNLVLSSKKPGTAVVEFATVKAAELAVQNEVGLVDNPLKISWLEGQPQDAVGRSHSGLSKGSVLSERDYESLVMMRMRQAAERQQLIARMQQEDQEGPPT.

In terms of domain architecture, J spans 11–76 (DLYALLGIEE…AARAAYDKVR (66 aa)). The segment covering 79 to 106 (KKQAAERTQKLDEKRKKVKLDLEARERQ) has biased composition (basic and acidic residues). Positions 79-145 (KKQAAERTQK…SRQLEEQQRL (67 aa)) are disordered. Serine 112 carries the post-translational modification Phosphoserine. Residues 118–145 (SRSTRTLEQEIERLREEGSRQLEEQQRL) show a composition bias toward basic and acidic residues. In terms of domain architecture, RRM spans 178-249 (KCKKEDESKG…NPLKISWLEG (72 aa)). Lysine 264 is modified (N6-methyllysine).

It localises to the cytoplasm. It is found in the nucleus. May negatively affect PAX8-induced thyroglobulin/TG transcription. This Homo sapiens (Human) protein is DnaJ homolog subfamily C member 17 (DNAJC17).